Reading from the N-terminus, the 127-residue chain is Protein YwpG (127 aa).

As to quaternary structure, interacts with both the D1 and D2 domains of dynamin-like protein DynA.

Its subcellular location is the cell membrane. This chain is Protein YwpG (ywpG), found in Bacillus subtilis (strain 168).